We begin with the raw amino-acid sequence, 141 residues long: MAIERTLSIIKPDAVAKNVIGKIVSRFEAAGLKIVAAKLVHLSRNEAEQFYSVHKERPFFKDLVDFMISGPVFVQVLEGENAIAKNRDLMGATDPKKAAPGTIRADFADSIDANAVHGSDAPETAANEVAFFFAGLNVYAR.

ATP contacts are provided by lysine 11, phenylalanine 59, arginine 87, threonine 93, arginine 104, and asparagine 114. Histidine 117 serves as the catalytic Pros-phosphohistidine intermediate.

Belongs to the NDK family. In terms of assembly, homotetramer. It depends on Mg(2+) as a cofactor.

It is found in the cytoplasm. The enzyme catalyses a 2'-deoxyribonucleoside 5'-diphosphate + ATP = a 2'-deoxyribonucleoside 5'-triphosphate + ADP. It carries out the reaction a ribonucleoside 5'-diphosphate + ATP = a ribonucleoside 5'-triphosphate + ADP. Functionally, major role in the synthesis of nucleoside triphosphates other than ATP. The ATP gamma phosphate is transferred to the NDP beta phosphate via a ping-pong mechanism, using a phosphorylated active-site intermediate. This is Nucleoside diphosphate kinase from Variovorax paradoxus (strain S110).